A 288-amino-acid polypeptide reads, in one-letter code: Acetyl-coenzyme A carboxylase carboxyl transferase subunit beta (288 aa).

The 259-residue stretch at 30 to 288 (IMTKCPKCKK…KLHQEVKKDA (259 aa)) folds into the CoA carboxyltransferase N-terminal domain. The Zn(2+) site is built by Cys34, Cys37, Cys53, and Cys56. The C4-type zinc finger occupies 34 to 56 (CPKCKKIMYTKELNENLNVCFNC).

The protein belongs to the AccD/PCCB family. As to quaternary structure, acetyl-CoA carboxylase is a heterohexamer composed of biotin carboxyl carrier protein (AccB), biotin carboxylase (AccC) and two subunits each of ACCase subunit alpha (AccA) and ACCase subunit beta (AccD). Zn(2+) is required as a cofactor.

Its subcellular location is the cytoplasm. The catalysed reaction is N(6)-carboxybiotinyl-L-lysyl-[protein] + acetyl-CoA = N(6)-biotinyl-L-lysyl-[protein] + malonyl-CoA. The protein operates within lipid metabolism; malonyl-CoA biosynthesis; malonyl-CoA from acetyl-CoA: step 1/1. In terms of biological role, component of the acetyl coenzyme A carboxylase (ACC) complex. Biotin carboxylase (BC) catalyzes the carboxylation of biotin on its carrier protein (BCCP) and then the CO(2) group is transferred by the transcarboxylase to acetyl-CoA to form malonyl-CoA. The protein is Acetyl-coenzyme A carboxylase carboxyl transferase subunit beta of Staphylococcus haemolyticus (strain JCSC1435).